A 165-amino-acid polypeptide reads, in one-letter code: uncharacterized protein (165 aa).

A disordered region spans residues 28 to 97; the sequence is EASAPSGNPP…QLSQSLEVPT (70 aa). Residues 34–47 are compositionally biased toward pro residues; the sequence is GNPPPPPPPPPPPI. 2 stretches are compositionally biased toward polar residues: residues 54-66 and 73-94; these read KSLN…QLDN and AQHT…QSLE.

This is an uncharacterized protein from Rickettsia prowazekii (strain Madrid E).